The sequence spans 545 residues: Glucose-6-phosphate isomerase (545 aa).

Glu351 functions as the Proton donor in the catalytic mechanism. Residues His382 and Lys510 contribute to the active site.

The protein belongs to the GPI family.

It localises to the cytoplasm. The catalysed reaction is alpha-D-glucose 6-phosphate = beta-D-fructose 6-phosphate. Its pathway is carbohydrate biosynthesis; gluconeogenesis. It functions in the pathway carbohydrate degradation; glycolysis; D-glyceraldehyde 3-phosphate and glycerone phosphate from D-glucose: step 2/4. In terms of biological role, catalyzes the reversible isomerization of glucose-6-phosphate to fructose-6-phosphate. The chain is Glucose-6-phosphate isomerase from Shewanella denitrificans (strain OS217 / ATCC BAA-1090 / DSM 15013).